Reading from the N-terminus, the 430-residue chain is Long-chain specific acyl-CoA dehydrogenase, mitochondrial (430 aa).

A mitochondrion-targeting transit peptide spans 1–30 (MAARLLRGSLRVLGGHRAPRQLPAARCSHS). An N6-acetyllysine modification is found at Lys42. Position 54 is a phosphoserine (Ser54). Residues Lys66 and Lys81 each carry the N6-acetyllysine; alternate modification. Residues Lys66 and Lys81 each carry the N6-succinyllysine; alternate modification. Residues Lys92 and Lys95 each carry the N6-acetyllysine modification. Lys165 is modified (N6-succinyllysine). FAD-binding positions include 170–179 (IAMTEPGAGS) and 203–205 (FIS). A substrate-binding site is contributed by Ser179. 227-228 (AH) is a substrate binding site. Lys240 is modified (N6-succinyllysine). N6-acetyllysine; alternate is present on residues Lys254 and Lys279. 2 positions are modified to N6-succinyllysine; alternate: Lys254 and Lys279. Substrate contacts are provided by residues Tyr282 and 289–292 (PQER). Catalysis depends on Glu291, which acts as the Proton acceptor. Arg317 lines the FAD pocket. Residue Lys318 is modified to N6-acetyllysine. Lys322 is subject to N6-acetyllysine; alternate. Lys322 carries the post-translational modification N6-succinyllysine; alternate. Residue Gln328 participates in FAD binding. Lys358 is subject to N6-acetyllysine. Residue Ser362 is modified to Phosphoserine. FAD is bound at residue 385-389 (QLHGG). 412–413 (GG) provides a ligand contact to substrate. FAD is bound at residue 414-416 (TNE).

Belongs to the acyl-CoA dehydrogenase family. In terms of assembly, homotetramer. FAD is required as a cofactor. In terms of processing, acetylation at Lys-318 and Lys-322 in proximity of the cofactor-binding sites strongly reduces catalytic activity. These sites are deacetylated by SIRT3.

The protein resides in the mitochondrion matrix. It carries out the reaction a long-chain 2,3-saturated fatty acyl-CoA + oxidized [electron-transfer flavoprotein] + H(+) = a long-chain (2E)-enoyl-CoA + reduced [electron-transfer flavoprotein]. The enzyme catalyses hexanoyl-CoA + oxidized [electron-transfer flavoprotein] + H(+) = (2E)-hexenoyl-CoA + reduced [electron-transfer flavoprotein]. The catalysed reaction is octanoyl-CoA + oxidized [electron-transfer flavoprotein] + H(+) = (2E)-octenoyl-CoA + reduced [electron-transfer flavoprotein]. It catalyses the reaction decanoyl-CoA + oxidized [electron-transfer flavoprotein] + H(+) = (2E)-decenoyl-CoA + reduced [electron-transfer flavoprotein]. It carries out the reaction dodecanoyl-CoA + oxidized [electron-transfer flavoprotein] + H(+) = (2E)-dodecenoyl-CoA + reduced [electron-transfer flavoprotein]. The enzyme catalyses tetradecanoyl-CoA + oxidized [electron-transfer flavoprotein] + H(+) = (2E)-tetradecenoyl-CoA + reduced [electron-transfer flavoprotein]. The catalysed reaction is oxidized [electron-transfer flavoprotein] + hexadecanoyl-CoA + H(+) = (2E)-hexadecenoyl-CoA + reduced [electron-transfer flavoprotein]. It catalyses the reaction octadecanoyl-CoA + oxidized [electron-transfer flavoprotein] + H(+) = (2E)-octadecenoyl-CoA + reduced [electron-transfer flavoprotein]. It carries out the reaction eicosanoyl-CoA + oxidized [electron-transfer flavoprotein] + H(+) = (2E)-eicosenoyl-CoA + reduced [electron-transfer flavoprotein]. The enzyme catalyses docosanoyl-CoA + oxidized [electron-transfer flavoprotein] + H(+) = (2E)-docosenoyl-CoA + reduced [electron-transfer flavoprotein]. The catalysed reaction is tetracosanoyl-CoA + oxidized [electron-transfer flavoprotein] + H(+) = (2E)-tetracosenoyl-CoA + reduced [electron-transfer flavoprotein]. It catalyses the reaction (5E)-tetradecenoyl-CoA + oxidized [electron-transfer flavoprotein] + H(+) = (2E,5E)-tetradecadienoyl-CoA + reduced [electron-transfer flavoprotein]. It carries out the reaction (5Z)-tetradecenoyl-CoA + oxidized [electron-transfer flavoprotein] + H(+) = (2E,5Z)-tetradecadienoyl-CoA + reduced [electron-transfer flavoprotein]. The enzyme catalyses oxidized [electron-transfer flavoprotein] + (9Z)-octadecenoyl-CoA + H(+) = (2E,9Z)-octadecadienoyl-CoA + reduced [electron-transfer flavoprotein]. It functions in the pathway lipid metabolism; mitochondrial fatty acid beta-oxidation. Its function is as follows. Long-chain specific acyl-CoA dehydrogenase is one of the acyl-CoA dehydrogenases that catalyze the first step of mitochondrial fatty acid beta-oxidation, an aerobic process breaking down fatty acids into acetyl-CoA and allowing the production of energy from fats. The first step of fatty acid beta-oxidation consists in the removal of one hydrogen from C-2 and C-3 of the straight-chain fatty acyl-CoA thioester, resulting in the formation of trans-2-enoyl-CoA. Among the different mitochondrial acyl-CoA dehydrogenases, long-chain specific acyl-CoA dehydrogenase can act on saturated and unsaturated acyl-CoAs with 6 to 24 carbons with a preference for 8 to 18 carbons long primary chains. In Homo sapiens (Human), this protein is Long-chain specific acyl-CoA dehydrogenase, mitochondrial.